Here is a 397-residue protein sequence, read N- to C-terminus: Pentatricopeptide repeat-containing protein At1g80150, mitochondrial (397 aa).

Residues 1–81 (MLSLRHIRRF…FAFEDTVSRL (81 aa)) constitute a mitochondrion transit peptide. 8 PPR repeats span residues 105–139 (REGF…GCKR), 140–170 (SVKS…APSK), 176–210 (DAVS…GLTP), 211–245 (DVVT…GCKP), 246–280 (NLTT…QVEP), 281–315 (DSIT…GYKP), 316–350 (NLKI…KWYP), and 351–381 (NLDT…VHRR).

The protein belongs to the PPR family. P subfamily.

Its subcellular location is the mitochondrion. This Arabidopsis thaliana (Mouse-ear cress) protein is Pentatricopeptide repeat-containing protein At1g80150, mitochondrial.